A 139-amino-acid chain; its full sequence is Angiogenin (139 aa).

Residues 1–21 (MAMSSLWWTAILLLALTVSMC) form the signal peptide. His34 acts as the Proton acceptor in catalysis. Intrachain disulfides connect Cys49–Cys102, Cys64–Cys111, and Cys82–Cys126. 2 residues coordinate tRNA: Cys102 and Val122. The active-site Proton donor is the His133.

It belongs to the pancreatic ribonuclease family. In terms of assembly, homodimer. Interacts with RNH1; inhibiting ANG ribonuclease activity.

The protein resides in the secreted. Its subcellular location is the nucleus. The protein localises to the nucleolus. It is found in the cytoplasm. It localises to the stress granule. Functionally, secreted ribonuclease that can either promote or restrict cell proliferation of target cells, depending on the context. Endocytosed in target cells via its receptor PLXNB2 and translocates to the cytoplasm or nucleus. Under stress conditions, localizes to the cytoplasm and promotes the assembly of stress granules (SGs): specifically cleaves a subset of tRNAs within anticodon loops to produce tRNA-derived stress-induced fragments (tiRNAs), resulting in translation repression and inhibition of cell proliferation. tiRNas also prevent formation of apoptosome, thereby promoting cell survival. Preferentially cleaves RNAs between a pyrimidine and an adenosine residue, suggesting that it cleaves the anticodon loop of tRNA(Ala) (32-UUAGCAU-38) after positions 33 and 36. Cleaves a subset of tRNAs, including tRNA(Ala), tRNA(Glu), tRNA(Gly), tRNA(Lys), tRNA(Val), tRNA(His), tRNA(Asp) and tRNA(Sec). Under growth conditions and in differentiated cells, translocates to the nucleus and stimulates ribosomal RNA (rRNA) transcription, including that containing the initiation site sequences of 45S rRNA, thereby promoting cell growth and proliferation. Angiogenin induces vascularization of normal and malignant tissues via its ability to promote rRNA transcription. The polypeptide is Angiogenin (ANG) (Gallus gallus (Chicken)).